Here is a 386-residue protein sequence, read N- to C-terminus: Agamous-like MADS-box protein AGL103 (386 aa).

One can recognise an MADS-box domain in the interval 29–76; it reads SSSRATSLIKRQQTVFKKAKELSILCDIDVCVICYGSNGELKTWPEER.

In terms of assembly, interacts with MEE14/CBP1.

The protein resides in the nucleus. Functionally, probable transcription factor that may function in the maintenance of the proper function of the central cell in pollen tube attraction. In Arabidopsis thaliana (Mouse-ear cress), this protein is Agamous-like MADS-box protein AGL103.